A 184-amino-acid chain; its full sequence is MEEYKALLDEKMSKVLLSLESEYKSLRTGRINSSLFDKVLVDYYGEKTPLTRVANVSIPEARLIVIQPWDKSLLSKIEQAILSSDLSMNPSSDGAVLRIKVPVLTVERRKEIVKQAKKIAEEYKVAARNVRQELNSKAKKQEKDSQITEDDLRRILDDIQRDTNSYIKKIDEIFDLKTKEIMEV.

It belongs to the RRF family.

The protein resides in the cytoplasm. Responsible for the release of ribosomes from messenger RNA at the termination of protein biosynthesis. May increase the efficiency of translation by recycling ribosomes from one round of translation to another. This Borrelia turicatae (strain 91E135) protein is Ribosome-recycling factor.